The primary structure comprises 108 residues: Glutaredoxin (108 aa).

One can recognise a Glutaredoxin domain in the interval 3–103 (LAKAKEIVSG…PLLTEAGAIA (101 aa)). C23 and C26 are joined by a disulfide.

It belongs to the glutaredoxin family. CPYC subfamily.

It is found in the cytoplasm. In terms of biological role, has a glutathione-disulfide oxidoreductase activity in the presence of NADPH and glutathione reductase. Reduces low molecular weight disulfides and proteins. The protein is Glutaredoxin of Solanum lycopersicum (Tomato).